Consider the following 327-residue polypeptide: Complex I intermediate-associated protein 30, mitochondrial (327 aa).

The transit peptide at 1-24 (MALVHKLLRGTYILRKFSKPASAL) directs the protein to the mitochondrion. Positions 42–63 (PVASPGKASSQRKTEGDLQGDH) are disordered. Over residues 53-63 (RKTEGDLQGDH) the composition is skewed to basic and acidic residues. Ser-318 is modified (phosphoserine).

The protein belongs to the CIA30 family. Part of the mitochondrial complex I assembly/MCIA complex that comprises at least the core subunits TMEM126B, NDUFAF1, ECSIT and ACAD9 and complement subunits such as COA1 and TMEM186. Interacts with ECSIT. Interacts with ACAD9. At early stages of complex I assembly, it is found in intermediate subcomplexes that contain different subunits including NDUFB6, NDUFA6, NDUFA9, NDUFS3, NDUFS7, ND1, ND2 and ND3. Interacts with TMEM70 and TMEM242.

The protein localises to the mitochondrion. It localises to the mitochondrion matrix. Its function is as follows. As part of the MCIA complex, involved in the assembly of the mitochondrial complex I. In Pongo pygmaeus (Bornean orangutan), this protein is Complex I intermediate-associated protein 30, mitochondrial.